The sequence spans 144 residues: Large ribosomal subunit protein uL13 (144 aa).

This sequence belongs to the universal ribosomal protein uL13 family. Part of the 50S ribosomal subunit.

This protein is one of the early assembly proteins of the 50S ribosomal subunit, although it is not seen to bind rRNA by itself. It is important during the early stages of 50S assembly. This chain is Large ribosomal subunit protein uL13, found in Oleidesulfovibrio alaskensis (strain ATCC BAA-1058 / DSM 17464 / G20) (Desulfovibrio alaskensis).